We begin with the raw amino-acid sequence, 309 residues long: Glutaminase (309 aa).

The substrate site is built by S64, N114, E160, N167, Y191, Y243, and V261.

Belongs to the glutaminase family. In terms of assembly, homotetramer.

It catalyses the reaction L-glutamine + H2O = L-glutamate + NH4(+). The sequence is that of Glutaminase from Rhizobium etli (strain CIAT 652).